We begin with the raw amino-acid sequence, 777 residues long: Disintegrin and metalloproteinase domain-containing protein 5 (777 aa).

Residues methionine 1 to alanine 16 form the signal peptide. Residues glycine 17–tyrosine 142 constitute a propeptide that is removed on maturation. Topologically, residues glycine 17 to arginine 706 are extracellular. 2 N-linked (GlcNAc...) asparagine glycosylation sites follow: asparagine 49 and asparagine 123. Residues arginine 185 to serine 382 form the Peptidase M12B domain. Cystine bridges form between cysteine 294–cysteine 377, cysteine 336–cysteine 361, cysteine 338–cysteine 343, and cysteine 456–cysteine 477. In terms of domain architecture, Disintegrin spans arginine 396 to asparagine 485. Asparagine 566 carries an N-linked (GlcNAc...) asparagine glycan. Residues asparagine 633–alanine 667 enclose the EGF-like domain. Cystine bridges form between cysteine 637–cysteine 649, cysteine 643–cysteine 655, and cysteine 657–cysteine 666. Residues phenylalanine 707 to lysine 727 form a helical membrane-spanning segment. The Cytoplasmic portion of the chain corresponds to glutamine 728–glutamine 777. The segment covering serine 744 to glutamate 760 has biased composition (polar residues). The tract at residues serine 744 to glutamine 777 is disordered. Over residues phenylalanine 763–glutamine 777 the composition is skewed to basic and acidic residues.

Interacts with TEX101. Subject to proteolytic processing during epididymal transit of spermatozoa. As to expression, detected in testis.

It localises to the membrane. This is a non catalytic metalloprotease-like protein. May play a role in sperm-egg fusion. This is Disintegrin and metalloproteinase domain-containing protein 5 (ADAM5) from Cavia porcellus (Guinea pig).